Reading from the N-terminus, the 549-residue chain is Cation/acetate symporter ActP (549 aa).

Helical transmembrane passes span 33 to 53 (WQAI…TYWA), 77 to 97 (LAIA…ALVF), 103 to 123 (GLIY…LIAE), 148 to 168 (ILSA…QMVG), 183 to 203 (IAVV…GMLA), 206 to 226 (WVQI…AFMV), 262 to 282 (ISAL…PHIL), 303 to 323 (GFMG…IMLV), 355 to 375 (LFLG…VAGL), 404 to 424 (VSKI…VLFE), 428 to 448 (IAFM…PIIL), 464 to 484 (GGWL…TIWV), and 493 to 513 (IFPY…GIWF).

This sequence belongs to the sodium:solute symporter (SSF) (TC 2.A.21) family.

It is found in the cell inner membrane. In terms of biological role, transports acetate. This Salmonella gallinarum (strain 287/91 / NCTC 13346) protein is Cation/acetate symporter ActP.